The chain runs to 488 residues: Katanin p60 ATPase-containing subunit A-like 1 (488 aa).

M1 is modified (N-acetylmethionine). Residues 128–179 are disordered; that stretch reads GAGARGLVGRAHQISKSDKAASRDKDYRARGRDDKARKNMQDGASDGEIPKF. Over residues 142 to 167 the composition is skewed to basic and acidic residues; the sequence is SKSDKAASRDKDYRARGRDDKARKNM. A Phosphoserine modification is found at S172. Position 246–253 (246–253) interacts with ATP; that stretch reads GPPGTGKT.

It belongs to the AAA ATPase family. Katanin p60 subunit A1 subfamily. A-like 1 sub-subfamily. As to quaternary structure, interacts with KATNB1 and KATNBL1.

Its subcellular location is the cytoplasm. It is found in the cytoskeleton. The protein localises to the spindle pole. The protein resides in the spindle. The catalysed reaction is n ATP + n H2O + a microtubule = n ADP + n phosphate + (n+1) alpha/beta tubulin heterodimers.. Functionally, regulates microtubule dynamics in Sertoli cells, a process that is essential for spermiogenesis and male fertility. Severs microtubules in an ATP-dependent manner, promoting rapid reorganization of cellular microtubule arrays. Has microtubule-severing activity in vitro. The polypeptide is Katanin p60 ATPase-containing subunit A-like 1 (Katnal1) (Rattus norvegicus (Rat)).